The following is a 364-amino-acid chain: Chorismate synthase (364 aa).

Arg-47 lines the NADP(+) pocket. Residues 125–127, Gly-288, 303–307, and Arg-329 each bind FMN; these read RAS and KPTAT.

It belongs to the chorismate synthase family. In terms of assembly, homotetramer. It depends on FMNH2 as a cofactor.

The catalysed reaction is 5-O-(1-carboxyvinyl)-3-phosphoshikimate = chorismate + phosphate. It participates in metabolic intermediate biosynthesis; chorismate biosynthesis; chorismate from D-erythrose 4-phosphate and phosphoenolpyruvate: step 7/7. Catalyzes the anti-1,4-elimination of the C-3 phosphate and the C-6 proR hydrogen from 5-enolpyruvylshikimate-3-phosphate (EPSP) to yield chorismate, which is the branch point compound that serves as the starting substrate for the three terminal pathways of aromatic amino acid biosynthesis. This reaction introduces a second double bond into the aromatic ring system. The chain is Chorismate synthase from Synechococcus sp. (strain CC9902).